Here is a 276-residue protein sequence, read N- to C-terminus: Diaminopimelate epimerase (276 aa).

The substrate site is built by asparagine 13, glutamine 46, and asparagine 66. Cysteine 75 serves as the catalytic Proton donor. Residues 76-77 (GN), asparagine 159, asparagine 192, and 210-211 (ER) each bind substrate. The active-site Proton acceptor is cysteine 219. 220–221 (GS) contributes to the substrate binding site.

This sequence belongs to the diaminopimelate epimerase family. As to quaternary structure, homodimer.

It localises to the cytoplasm. It catalyses the reaction (2S,6S)-2,6-diaminopimelate = meso-2,6-diaminopimelate. The protein operates within amino-acid biosynthesis; L-lysine biosynthesis via DAP pathway; DL-2,6-diaminopimelate from LL-2,6-diaminopimelate: step 1/1. Its function is as follows. Catalyzes the stereoinversion of LL-2,6-diaminopimelate (L,L-DAP) to meso-diaminopimelate (meso-DAP), a precursor of L-lysine and an essential component of the bacterial peptidoglycan. The protein is Diaminopimelate epimerase of Vibrio parahaemolyticus serotype O3:K6 (strain RIMD 2210633).